Consider the following 93-residue polypeptide: Acylphosphatase (93 aa).

The Acylphosphatase-like domain maps to R5 to S91. Active-site residues include R20 and N38.

It belongs to the acylphosphatase family.

The enzyme catalyses an acyl phosphate + H2O = a carboxylate + phosphate + H(+). The sequence is that of Acylphosphatase (acyP) from Moorella thermoacetica (strain ATCC 39073 / JCM 9320).